The sequence spans 180 residues: Inner membrane-spanning protein YciB (180 aa).

The next 5 helical transmembrane spans lie at 25–45 (QNAT…CYII), 49–69 (VSKL…ITLI), 76–96 (IKIK…MSGI), 118–138 (ITLS…NEIV), and 150–170 (FKVF…LPLL).

Belongs to the YciB family.

The protein localises to the cell inner membrane. Plays a role in cell envelope biogenesis, maintenance of cell envelope integrity and membrane homeostasis. This chain is Inner membrane-spanning protein YciB, found in Rickettsia akari (strain Hartford).